The primary structure comprises 163 residues: Putative 4-hydroxy-4-methyl-2-oxoglutarate aldolase (163 aa).

Substrate-binding positions include 76-79 and Arg98; that span reads GDMI. A divalent metal cation is bound at residue Asp99.

This sequence belongs to the class II aldolase/RraA-like family. As to quaternary structure, homotrimer. A divalent metal cation serves as cofactor.

It catalyses the reaction 4-hydroxy-4-methyl-2-oxoglutarate = 2 pyruvate. The catalysed reaction is oxaloacetate + H(+) = pyruvate + CO2. Functionally, catalyzes the aldol cleavage of 4-hydroxy-4-methyl-2-oxoglutarate (HMG) into 2 molecules of pyruvate. Also contains a secondary oxaloacetate (OAA) decarboxylase activity due to the common pyruvate enolate transition state formed following C-C bond cleavage in the retro-aldol and decarboxylation reactions. The protein is Putative 4-hydroxy-4-methyl-2-oxoglutarate aldolase of Pseudomonas fluorescens (strain Pf0-1).